The primary structure comprises 212 residues: Adenylate kinase (212 aa).

10–15 (GAGKGT) serves as a coordination point for ATP. The segment at 30-59 (STGDMFRAAMANQTEMGRLAKSYIDKGELV) is NMP. AMP is bound by residues threonine 31, arginine 36, 57–59 (ELV), 86–89 (GYPR), and glutamine 93. Positions 127–159 (GRIINRKTGETFHKVFNPPVDYKEEDYYQREDD) are LID. ATP contacts are provided by residues arginine 128 and 137–138 (TF). AMP is bound by residues arginine 156 and arginine 167. Position 195 (glutamine 195) interacts with ATP.

The protein belongs to the adenylate kinase family. Monomer.

It localises to the cytoplasm. It carries out the reaction AMP + ATP = 2 ADP. The protein operates within purine metabolism; AMP biosynthesis via salvage pathway; AMP from ADP: step 1/1. Functionally, catalyzes the reversible transfer of the terminal phosphate group between ATP and AMP. Plays an important role in cellular energy homeostasis and in adenine nucleotide metabolism. This Streptococcus pyogenes serotype M12 (strain MGAS2096) protein is Adenylate kinase.